The primary structure comprises 541 residues: MFQDKGWVLVTLIALVTPSWAAYKLQERYSWNQLDFAFPNARLKEQALASGDYIPQNALPVGVEHFGNRLFVTVPRWRDGIPATLTYINMDRSLTGSPELIPYPDWRSNTAGDCANSITTAYRIKVDECGRLWVLDTGTVGIGNTTTNPCPYAVNVYDLTTDTRIRRYVLPAVDTNPNTFIANIAVDIGKNCDDAYAYFADELGYGLIAYSWEQDKSWRFSAHSYFFPDPLRGDFNVAGINFQWGEEGIFGMSLSPIRSDGYRTLYFSPLASHRQFAVSTRILRDETRTEDSYHDFVALDERGPNSHTTSRVMSDDGIELFNLIDQNAVGCWHSSMPYSPQFHGIVDRDDVGLVFPADVKIDENKNVWVLSDRMPVFLLSDLDYSDTNFRIYTAPLATLIENTVCDLRNNAYGPPNTVSIPKQAVLPVGPPLYTKQYRPVLPQKPQTSWASSPPPPSRTYLPANSGNVVSSISVSTNTVGPAGVEVPKAYIFNQHNGINYETSGPHLFPTLQPAQSGRQDGGLKTYVNARQSGWWHHQHQG.

Residues 1 to 21 (MFQDKGWVLVTLIALVTPSWA) form the signal peptide. An N-linked (GlcNAc...) asparagine glycan is attached at N144.

Belongs to the major royal jelly protein family.

The protein resides in the secreted. Its function is as follows. Controls the pigmentation pattern of the adult cuticle and larval mouth parts. The polypeptide is Protein yellow (y) (Drosophila erecta (Fruit fly)).